The chain runs to 131 residues: Arsenate reductase (131 aa).

Catalysis depends on nucleophile residues cysteine 10, cysteine 82, and cysteine 89. 2 disulfides stabilise this stretch: cysteine 10–cysteine 82 and cysteine 82–cysteine 89.

This sequence belongs to the low molecular weight phosphotyrosine protein phosphatase family. Thioredoxin-coupled ArsC subfamily.

It is found in the cytoplasm. It catalyses the reaction arsenate + [thioredoxin]-dithiol + H(+) = arsenite + [thioredoxin]-disulfide + H2O. In terms of biological role, catalyzes the reduction of arsenate [As(V)] to arsenite [As(III)]. This chain is Arsenate reductase, found in Staphylococcus xylosus.